The primary structure comprises 348 residues: Histidinol-phosphate aminotransferase (348 aa).

Position 207 is an N6-(pyridoxal phosphate)lysine (Lys207).

It belongs to the class-II pyridoxal-phosphate-dependent aminotransferase family. Histidinol-phosphate aminotransferase subfamily. In terms of assembly, homodimer. Pyridoxal 5'-phosphate is required as a cofactor.

It carries out the reaction L-histidinol phosphate + 2-oxoglutarate = 3-(imidazol-4-yl)-2-oxopropyl phosphate + L-glutamate. It participates in amino-acid biosynthesis; L-histidine biosynthesis; L-histidine from 5-phospho-alpha-D-ribose 1-diphosphate: step 7/9. The protein is Histidinol-phosphate aminotransferase of Crocosphaera subtropica (strain ATCC 51142 / BH68) (Cyanothece sp. (strain ATCC 51142)).